A 414-amino-acid polypeptide reads, in one-letter code: Putative L-lactate dehydrogenase (414 aa).

An FMN hydroxy acid dehydrogenase domain is found at 29 to 406 (RRLGAALTIQ…SPRHVTQLRR (378 aa)). Residue Tyr-55 participates in a 2-oxocarboxylate binding. Positions 137 and 159 each coordinate FMN. Tyr-161 contacts a 2-oxocarboxylate. FMN is bound at residue Thr-187. A 2-oxocarboxylate is bound at residue Arg-196. Lys-277 serves as a coordination point for FMN. His-301 (proton acceptor) is an active-site residue. Arg-304 serves as a coordination point for a 2-oxocarboxylate. FMN-binding positions include 332-336 (DTGIM) and 355-356 (GR).

The protein belongs to the FMN-dependent alpha-hydroxy acid dehydrogenase family. Requires FMN as cofactor.

It carries out the reaction (S)-lactate + A = pyruvate + AH2. The protein is Putative L-lactate dehydrogenase (lldD) of Mycobacterium tuberculosis (strain ATCC 25618 / H37Rv).